A 223-amino-acid chain; its full sequence is Proteasome subunit beta type-1 (223 aa).

This sequence belongs to the peptidase T1B family. Component of the 20S core complex of the 26S proteasome. The 26S proteasome is composed of a core protease (CP), known as the 20S proteasome, capped at one or both ends by the 19S regulatory particle (RP/PA700). The 20S proteasome core is composed of 28 subunits that are arranged in four stacked rings, resulting in a barrel-shaped structure. The two end rings are each formed by seven alpha subunits, and the two central rings are each formed by seven beta subunits. The catalytic chamber with the active sites is on the inside of the barrel. Present in all tissues examined. Slightly lower levels in roots.

Its subcellular location is the cytoplasm. It localises to the nucleus. In terms of biological role, non-catalytic component of the proteasome, a multicatalytic proteinase complex which is characterized by its ability to cleave peptides with Arg, Phe, Tyr, Leu, and Glu adjacent to the leaving group at neutral or slightly basic pH. The proteasome has an ATP-dependent proteolytic activity. The polypeptide is Proteasome subunit beta type-1 (PBF1) (Arabidopsis thaliana (Mouse-ear cress)).